A 117-amino-acid chain; its full sequence is Immunoglobulin lambda variable 2 (117 aa).

The N-terminal stretch at 1–19 (MAWTSLILSLLALCSGASS) is a signal peptide. The residue at position 20 (Gln-20) is a Pyrrolidone carboxylic acid. Residues 20 to 117 (QAVVTQESAL…FCALWYSTHF (98 aa)) form the Ig-like domain.

The polypeptide is Immunoglobulin lambda variable 2 (Mus musculus (Mouse)).